Reading from the N-terminus, the 468-residue chain is Bifunctional protein HldE (468 aa).

The tract at residues 1-315 (MAKKVEILVV…ELLRSRANAE (315 aa)) is ribokinase. An ATP-binding site is contributed by 192–195 (NRKE). Asp260 is an active-site residue. The segment at 340–468 (FTNGCFDILH…IVKRIKDADK (129 aa)) is cytidylyltransferase.

In the N-terminal section; belongs to the carbohydrate kinase PfkB family. The protein in the C-terminal section; belongs to the cytidylyltransferase family. In terms of assembly, homodimer.

The catalysed reaction is D-glycero-beta-D-manno-heptose 7-phosphate + ATP = D-glycero-beta-D-manno-heptose 1,7-bisphosphate + ADP + H(+). The enzyme catalyses D-glycero-beta-D-manno-heptose 1-phosphate + ATP + H(+) = ADP-D-glycero-beta-D-manno-heptose + diphosphate. Its pathway is nucleotide-sugar biosynthesis; ADP-L-glycero-beta-D-manno-heptose biosynthesis; ADP-L-glycero-beta-D-manno-heptose from D-glycero-beta-D-manno-heptose 7-phosphate: step 1/4. It functions in the pathway nucleotide-sugar biosynthesis; ADP-L-glycero-beta-D-manno-heptose biosynthesis; ADP-L-glycero-beta-D-manno-heptose from D-glycero-beta-D-manno-heptose 7-phosphate: step 3/4. In terms of biological role, catalyzes the phosphorylation of D-glycero-D-manno-heptose 7-phosphate at the C-1 position to selectively form D-glycero-beta-D-manno-heptose-1,7-bisphosphate. Its function is as follows. Catalyzes the ADP transfer from ATP to D-glycero-beta-D-manno-heptose 1-phosphate, yielding ADP-D-glycero-beta-D-manno-heptose. The sequence is that of Bifunctional protein HldE from Campylobacter curvus (strain 525.92).